Reading from the N-terminus, the 103-residue chain is Co-chaperonin GroES (103 aa).

Belongs to the GroES chaperonin family. Heptamer of 7 subunits arranged in a ring. Interacts with the chaperonin GroEL.

Its subcellular location is the cytoplasm. Together with the chaperonin GroEL, plays an essential role in assisting protein folding. The GroEL-GroES system forms a nano-cage that allows encapsulation of the non-native substrate proteins and provides a physical environment optimized to promote and accelerate protein folding. GroES binds to the apical surface of the GroEL ring, thereby capping the opening of the GroEL channel. This chain is Co-chaperonin GroES, found in Dinoroseobacter shibae (strain DSM 16493 / NCIMB 14021 / DFL 12).